Consider the following 112-residue polypeptide: Flowering-promoting factor 1-like protein 2 (112 aa).

This sequence belongs to the FPF1 family. Expressed in leaves and in some parts of the flowers, mainly in the sepals.

Modulates the competence to flowering of apical meristems. This Arabidopsis thaliana (Mouse-ear cress) protein is Flowering-promoting factor 1-like protein 2 (FLP2).